A 473-amino-acid polypeptide reads, in one-letter code: tRNA modification GTPase MnmE (473 aa).

(6S)-5-formyl-5,6,7,8-tetrahydrofolate is bound by residues Arg28, Glu93, and Arg132. The 167-residue stretch at 228-394 (GVATVLVGSP…LKQQMSNMVA (167 aa)) folds into the TrmE-type G domain. GTP-binding positions include 238-243 (NAGKST), 257-263 (SHQPGTT), and 282-285 (DTAG). Mg(2+) is bound by residues Ser242 and Thr263. Residue Lys473 coordinates (6S)-5-formyl-5,6,7,8-tetrahydrofolate.

The protein belongs to the TRAFAC class TrmE-Era-EngA-EngB-Septin-like GTPase superfamily. TrmE GTPase family. Homodimer. Heterotetramer of two MnmE and two MnmG subunits. Requires K(+) as cofactor.

It localises to the cytoplasm. Functionally, exhibits a very high intrinsic GTPase hydrolysis rate. Involved in the addition of a carboxymethylaminomethyl (cmnm) group at the wobble position (U34) of certain tRNAs, forming tRNA-cmnm(5)s(2)U34. This Chlorobium chlorochromatii (strain CaD3) protein is tRNA modification GTPase MnmE.